We begin with the raw amino-acid sequence, 944 residues long: Translation initiation factor IF-2 (944 aa).

Disordered regions lie at residues 61–157 (IQAN…KAKQ) and 173–281 (TQSN…SHKI). Polar residues predominate over residues 132–150 (TFENQTPPTENTPKVVSHS). The span at 175–185 (SNANNASNANN) shows a compositional bias: low complexity. Residues 186 to 203 (AKKEISEVKKQEQEIKRH) are compositionally biased toward basic and acidic residues. Positions 204–215 (ENIKRRTGFRVI) are enriched in basic residues. The span at 244–259 (EDIKKEWQEKDKQEAK) shows a compositional bias: basic and acidic residues. Positions 443-612 (ERPPVVTIMG…LIQAGIMELK (170 aa)) constitute a tr-type G domain. Residues 452-459 (GHVDHGKT) are G1. 452-459 (GHVDHGKT) contributes to the GTP binding site. The G2 stretch occupies residues 477 to 481 (GITQH). Positions 498–501 (DTPG) are G3. GTP is bound by residues 498-502 (DTPGH) and 552-555 (NKMD). The G4 stretch occupies residues 552–555 (NKMD). The segment at 588–590 (SAK) is G5.

The protein belongs to the TRAFAC class translation factor GTPase superfamily. Classic translation factor GTPase family. IF-2 subfamily.

The protein localises to the cytoplasm. Functionally, one of the essential components for the initiation of protein synthesis. Protects formylmethionyl-tRNA from spontaneous hydrolysis and promotes its binding to the 30S ribosomal subunits. Also involved in the hydrolysis of GTP during the formation of the 70S ribosomal complex. The chain is Translation initiation factor IF-2 (infB) from Helicobacter pylori (strain ATCC 700392 / 26695) (Campylobacter pylori).